A 464-amino-acid chain; its full sequence is Siroheme synthase (464 aa).

A precorrin-2 dehydrogenase /sirohydrochlorin ferrochelatase region spans residues 1–203 (MEFLPLFHNL…GQGAEAERLL (203 aa)). NAD(+)-binding positions include 22 to 23 (EI) and 43 to 44 (PE). At serine 128 the chain carries Phosphoserine. The interval 216–464 (GEVYLVGAGP…AWFEGAQATL (249 aa)) is uroporphyrinogen-III C-methyltransferase. Proline 225 is a binding site for S-adenosyl-L-methionine. Aspartate 248 (proton acceptor) is an active-site residue. Lysine 270 acts as the Proton donor in catalysis. Residues 301–303 (GGD), isoleucine 306, 331–332 (TA), methionine 383, and glycine 412 contribute to the S-adenosyl-L-methionine site.

In the N-terminal section; belongs to the precorrin-2 dehydrogenase / sirohydrochlorin ferrochelatase family. This sequence in the C-terminal section; belongs to the precorrin methyltransferase family.

It catalyses the reaction uroporphyrinogen III + 2 S-adenosyl-L-methionine = precorrin-2 + 2 S-adenosyl-L-homocysteine + H(+). The enzyme catalyses precorrin-2 + NAD(+) = sirohydrochlorin + NADH + 2 H(+). The catalysed reaction is siroheme + 2 H(+) = sirohydrochlorin + Fe(2+). The protein operates within cofactor biosynthesis; adenosylcobalamin biosynthesis; precorrin-2 from uroporphyrinogen III: step 1/1. It functions in the pathway cofactor biosynthesis; adenosylcobalamin biosynthesis; sirohydrochlorin from precorrin-2: step 1/1. Its pathway is porphyrin-containing compound metabolism; siroheme biosynthesis; precorrin-2 from uroporphyrinogen III: step 1/1. It participates in porphyrin-containing compound metabolism; siroheme biosynthesis; siroheme from sirohydrochlorin: step 1/1. The protein operates within porphyrin-containing compound metabolism; siroheme biosynthesis; sirohydrochlorin from precorrin-2: step 1/1. Multifunctional enzyme that catalyzes the SAM-dependent methylations of uroporphyrinogen III at position C-2 and C-7 to form precorrin-2 via precorrin-1. Then it catalyzes the NAD-dependent ring dehydrogenation of precorrin-2 to yield sirohydrochlorin. Finally, it catalyzes the ferrochelation of sirohydrochlorin to yield siroheme. The protein is Siroheme synthase of Pseudomonas syringae pv. tomato (strain ATCC BAA-871 / DC3000).